The sequence spans 101 residues: Apolipoprotein C-II (101 aa).

Positions 1 to 22 are cleaved as a signal peptide; the sequence is MGIRYLLVLVLVLLVLGCEVQG. Residues 66-74 form a lipid binding region; sequence TMDEKIREI. Residues 78–101 are lipoprotein lipase cofactor; the sequence is STAAVSTYAGIFTDQLLSMLKGDQ.

This sequence belongs to the apolipoprotein C2 family. In terms of processing, proapolipoprotein C-II is synthesized as a sialic acid containing glycoprotein which is subsequently desialylated prior to its proteolytic processing. Proapolipoprotein C-II, the major form found in plasma undergoes proteolytic cleavage of its N-terminal hexapeptide to generate apolipoprotein C-II, which occurs as the minor form in plasma.

Its subcellular location is the secreted. Its function is as follows. Component of chylomicrons, very low-density lipoproteins (VLDL), low-density lipoproteins (LDL), and high-density lipoproteins (HDL) in plasma. Plays an important role in lipoprotein metabolism as an activator of lipoprotein lipase. Both proapolipoprotein C-II and apolipoprotein C-II can activate lipoprotein lipase. The polypeptide is Apolipoprotein C-II (APOC2) (Phoca vitulina (Harbor seal)).